The primary structure comprises 465 residues: Kynureninase (465 aa).

Residues leucine 133, threonine 134, 161 to 164 (FPSD), serine 217, aspartate 246, histidine 249, and tyrosine 271 each bind pyridoxal 5'-phosphate. Lysine 272 bears the N6-(pyridoxal phosphate)lysine mark. Pyridoxal 5'-phosphate is bound by residues tryptophan 302 and asparagine 330.

It belongs to the kynureninase family. In terms of assembly, homodimer. Pyridoxal 5'-phosphate is required as a cofactor.

The protein resides in the cytoplasm. It catalyses the reaction L-kynurenine + H2O = anthranilate + L-alanine + H(+). The catalysed reaction is 3-hydroxy-L-kynurenine + H2O = 3-hydroxyanthranilate + L-alanine + H(+). It participates in amino-acid degradation; L-kynurenine degradation; L-alanine and anthranilate from L-kynurenine: step 1/1. The protein operates within cofactor biosynthesis; NAD(+) biosynthesis; quinolinate from L-kynurenine: step 2/3. Its function is as follows. Catalyzes the cleavage of L-kynurenine (L-Kyn) and L-3-hydroxykynurenine (L-3OHKyn) into anthranilic acid (AA) and 3-hydroxyanthranilic acid (3-OHAA), respectively. This Nematostella vectensis (Starlet sea anemone) protein is Kynureninase.